The sequence spans 207 residues: Ribosome maturation factor RimM (207 aa).

Positions 130-207 (EDEFYWVDLI…RIVVDWGLDY (78 aa)) constitute a PRC barrel domain.

This sequence belongs to the RimM family. As to quaternary structure, binds ribosomal protein uS19.

It is found in the cytoplasm. Functionally, an accessory protein needed during the final step in the assembly of 30S ribosomal subunit, possibly for assembly of the head region. Essential for efficient processing of 16S rRNA. May be needed both before and after RbfA during the maturation of 16S rRNA. It has affinity for free ribosomal 30S subunits but not for 70S ribosomes. This Cupriavidus taiwanensis (strain DSM 17343 / BCRC 17206 / CCUG 44338 / CIP 107171 / LMG 19424 / R1) (Ralstonia taiwanensis (strain LMG 19424)) protein is Ribosome maturation factor RimM.